The following is a 202-amino-acid chain: dITP/XTP pyrophosphatase (202 aa).

9-14 (TGNKGK) provides a ligand contact to substrate. Residue aspartate 73 is the Proton acceptor of the active site. Aspartate 73 contributes to the Mg(2+) binding site. Residues serine 74, 158–161 (FGYD), lysine 181, and 186–187 (HR) each bind substrate.

Belongs to the HAM1 NTPase family. As to quaternary structure, homodimer. It depends on Mg(2+) as a cofactor.

The catalysed reaction is XTP + H2O = XMP + diphosphate + H(+). It carries out the reaction dITP + H2O = dIMP + diphosphate + H(+). It catalyses the reaction ITP + H2O = IMP + diphosphate + H(+). In terms of biological role, pyrophosphatase that catalyzes the hydrolysis of nucleoside triphosphates to their monophosphate derivatives, with a high preference for the non-canonical purine nucleotides XTP (xanthosine triphosphate), dITP (deoxyinosine triphosphate) and ITP. Seems to function as a house-cleaning enzyme that removes non-canonical purine nucleotides from the nucleotide pool, thus preventing their incorporation into DNA/RNA and avoiding chromosomal lesions. The sequence is that of dITP/XTP pyrophosphatase from Lactobacillus acidophilus (strain ATCC 700396 / NCK56 / N2 / NCFM).